The sequence spans 129 residues: Sulfurtransferase TusD (129 aa).

Cys-79 serves as the catalytic Cysteine persulfide intermediate.

Belongs to the DsrE/TusD family. As to quaternary structure, heterohexamer, formed by a dimer of trimers. The hexameric TusBCD complex contains 2 copies each of TusB, TusC and TusD. The TusBCD complex interacts with TusE.

It localises to the cytoplasm. Functionally, part of a sulfur-relay system required for 2-thiolation of 5-methylaminomethyl-2-thiouridine (mnm(5)s(2)U) at tRNA wobble positions. Accepts sulfur from TusA and transfers it in turn to TusE. The polypeptide is Sulfurtransferase TusD (Pectobacterium carotovorum subsp. carotovorum (strain PC1)).